Consider the following 194-residue polypeptide: dTTP/UTP pyrophosphatase (194 aa).

Asp73 (proton acceptor) is an active-site residue.

It belongs to the Maf family. YhdE subfamily. The cofactor is a divalent metal cation.

It is found in the cytoplasm. It carries out the reaction dTTP + H2O = dTMP + diphosphate + H(+). The catalysed reaction is UTP + H2O = UMP + diphosphate + H(+). Its function is as follows. Nucleoside triphosphate pyrophosphatase that hydrolyzes dTTP and UTP. May have a dual role in cell division arrest and in preventing the incorporation of modified nucleotides into cellular nucleic acids. The chain is dTTP/UTP pyrophosphatase from Clostridium botulinum (strain Loch Maree / Type A3).